The primary structure comprises 294 residues: HTH-type transcriptional regulator ClcR (294 aa).

Positions 1 to 58 (MEFRQLRYFIAVAEEGNIGAAARRLHISQPPITRQIQALEQDLGVVLFERTHRGVELT) constitute an HTH lysR-type domain. The segment at residues 18-37 (IGAAARRLHISQPPITRQIQ) is a DNA-binding region (H-T-H motif).

The protein belongs to the LysR transcriptional regulatory family.

It localises to the cytoplasm. Functionally, involved in regulation of chlorinated catechol metabolism. Transcriptional activator of the clcABD chlorocatechol oxidative operon. This is HTH-type transcriptional regulator ClcR (clcR) from Pseudomonas putida (Arthrobacter siderocapsulatus).